A 170-amino-acid chain; its full sequence is CFA/I fimbrial subunit B (170 aa).

Positions 1-23 (MKFKKTIGAMALTTMFVAVSASA) are cleaved as a signal peptide.

The protein belongs to the fimbrial CS1 protein family. As to quaternary structure, CFA/I fimbriae are rather rigid, thread-like filaments of 0.5-1 micrometer, with an apparent axial hole, and a diameter of 7 nanometers. A single CFA/I fimbria consists of about 100 identical protein subunits.

Its subcellular location is the fimbrium. Fimbriae (also called pili), polar filaments radiating from the surface of the bacterium to a length of 0.5-1.5 micrometers and numbering 100-300 per cell, enable bacteria to colonize the epithelium of specific host organs. The chain is CFA/I fimbrial subunit B (cfaB) from Escherichia coli.